We begin with the raw amino-acid sequence, 654 residues long: Hepatocyte growth factor activator serine proteases (654 aa).

An N-terminal signal peptide occupies residues 1–33; the sequence is MGRWAWGPSLCPLPGMALLLLLLLLLVPHGAQP. Positions 34-100 are disordered; it reads QAGGNLTEPP…SSSPGDPVLT (67 aa). Residues 34–370 constitute a propeptide, removed in mature form; that stretch reads QAGGNLTEPP…RLAACESLAR (337 aa). N-linked (GlcNAc...) asparagine glycosylation is found at N38 and N46. Low complexity predominate over residues 57 to 81; the sequence is PVTSVTPVTPATSAPEAQGPRGRGL. Positions 101–148 constitute a Fibronectin type-II domain; that stretch reads VDGQPCRFPFRYGGRMLHACTSEGSAHRKWCATTHNYDRDRAWGYCVQ. Cystine bridges form between C106–C131, C120–C146, C162–C173, C167–C184, C186–C195, C200–C228, C226–C235, C243–C254, C248–C265, C267–C276, C284–C365, C305–C347, C336–C360, C393–C520, C431–C447, C439–C509, C534–C603, C566–C582, and C593–C621. Positions 158–196 constitute an EGF-like 1 domain; it reads ALDSCASSPCLNGGSCSHTQDPGSYHCTCPMAFTGRNCD. A Fibronectin type-I domain is found at 198–238; sequence EKCFDETRYEHLEAGDRWARVSQGQVEQCECAGGQIRCEGT. One can recognise an EGF-like 2 domain in the interval 239 to 277; it reads RHTACLSSPCLNGGTCHLIVATGTTVCSCPPGHAGRLCN. The Kringle domain occupies 283–365; the sequence is RCFVGNGTEY…SWEYCRLAAC (83 aa). An N-linked (GlcNAc...) asparagine glycan is attached at N288. One can recognise a Peptidase S1 domain in the interval 407 to 645; it reads IIGGSSSLPG…YVDWIKDRIW (239 aa). Catalysis depends on H446, which acts as the Charge relay system. N-linked (GlcNAc...) asparagine glycosylation is found at N467 and N491. The Charge relay system role is filled by D496. The N-linked (GlcNAc...) asparagine glycan is linked to N545. The Charge relay system role is filled by S597.

It belongs to the peptidase S1 family. As to quaternary structure, heterodimer of a short chain and a long chain linked by a disulfide bond. Post-translationally, the active form of HGFAC presents in the serum is derived from the COOH-terminal region of the precursor by the cleavage of bonds between Arg-370 and Ile-371 and Arg-406 and Ile-407. As to expression, liver.

Its subcellular location is the secreted. In terms of biological role, serine protease that hydrolyzes the inactive zymogen hepatocyte growth factor (HGFsc) to an activated disulfide-linked heterodimer, then initiating hepatocyte growth factor receptor signaling pathway. In Canis lupus familiaris (Dog), this protein is Hepatocyte growth factor activator serine proteases (HGFAC).